Reading from the N-terminus, the 160-residue chain is MSRRRRVSRRPVVSDGGPGGVLLARFINVVMSRGKKALAERIVSGALKMAESKSTGETGVSIFNTAVSNVMPRMEVRSRRVGGVTYQIPVEVREDRSTSLALRWIVKAARTNRKRTNKTYMSCLCNELLEAYNKRGSACKMKEEKFRMAEANKAFSHFRF.

This sequence belongs to the universal ribosomal protein uS7 family. Part of the 30S ribosomal subunit. Contacts proteins S9 and S11.

Its function is as follows. One of the primary rRNA binding proteins, it binds directly to 16S rRNA where it nucleates assembly of the head domain of the 30S subunit. Is located at the subunit interface close to the decoding center, probably blocks exit of the E-site tRNA. The protein is Small ribosomal subunit protein uS7 of Anaplasma marginale (strain Florida).